The chain runs to 265 residues: Tryptophan synthase alpha chain (265 aa).

Active-site proton acceptor residues include E50 and D61.

Belongs to the TrpA family. Tetramer of two alpha and two beta chains.

It catalyses the reaction (1S,2R)-1-C-(indol-3-yl)glycerol 3-phosphate + L-serine = D-glyceraldehyde 3-phosphate + L-tryptophan + H2O. Its pathway is amino-acid biosynthesis; L-tryptophan biosynthesis; L-tryptophan from chorismate: step 5/5. Its function is as follows. The alpha subunit is responsible for the aldol cleavage of indoleglycerol phosphate to indole and glyceraldehyde 3-phosphate. The protein is Tryptophan synthase alpha chain of Trichodesmium erythraeum (strain IMS101).